We begin with the raw amino-acid sequence, 262 residues long: Flap endonuclease Xni (262 aa).

Asp-105 is a Mg(2+) binding site. A 5'-3' exonuclease domain is found at 162-257; it reads ERSQFLDLMA…FRVIDSPPEK (96 aa). K(+) contacts are provided by Leu-172, Ala-173, Pro-181, Ile-183, and Ile-186. Residues 185-190 are interaction with DNA; the sequence is GIGPKS.

Belongs to the Xni family. It depends on Mg(2+) as a cofactor. K(+) is required as a cofactor.

Its function is as follows. Has flap endonuclease activity. During DNA replication, flap endonucleases cleave the 5'-overhanging flap structure that is generated by displacement synthesis when DNA polymerase encounters the 5'-end of a downstream Okazaki fragment. The protein is Flap endonuclease Xni of Shewanella baltica (strain OS223).